We begin with the raw amino-acid sequence, 326 residues long: uncharacterized protein (326 aa).

127 to 134 (GATGSGKS) provides a ligand contact to ATP.

This sequence belongs to the GSP E family.

This is an uncharacterized protein from Escherichia coli (strain K12).